The chain runs to 475 residues: Flavin-dependent monooxygenase (475 aa).

Belongs to the aromatic-ring hydroxylase family. FAD is required as a cofactor.

The protein localises to the cytoplasm. It catalyses the reaction a tetracycline + NADPH + O2 + H(+) = an 11a-hydroxytetracycline + NADP(+) + H2O. The enzyme catalyses tetracycline + NADPH + O2 + H(+) = 11a-hydroxytetracycline + NADP(+) + H2O. Inhibited by anhydrotetracycline. In terms of biological role, an FAD-requiring monooxygenase active on some tetracycline antibiotic derivatives, which leads to their inactivation. Hydroxylates carbon 11a of tetracycline and some analogs. Confers resistance to tetracycline and doxycycline via an oxidoreductase activity; probably monooxygenates the antibiotics. Does not act on tigecycline. The protein is Flavin-dependent monooxygenase of Mycobacteroides abscessus (strain ATCC 19977 / DSM 44196 / CCUG 20993 / CIP 104536 / JCM 13569 / NCTC 13031 / TMC 1543 / L948) (Mycobacterium abscessus).